Reading from the N-terminus, the 548-residue chain is 5-aminolevulinate synthase, mitochondrial (548 aa).

The N-terminal 22 residues, 1–22 (MQRSIFARFGNSSAAVSTLNRL), are a transit peptide targeting the mitochondrion. The substrate site is built by arginine 91, serine 204, and lysine 223. The pyridoxal 5'-phosphate site is built by serine 256, histidine 284, and threonine 334. The active site involves lysine 337. Lysine 337 carries the N6-(pyridoxal phosphate)lysine modification. The pyridoxal 5'-phosphate site is built by threonine 366 and threonine 367. Threonine 452 is a substrate binding site.

The protein belongs to the class-II pyridoxal-phosphate-dependent aminotransferase family. Homodimer. Interacts with MCX1. Requires pyridoxal 5'-phosphate as cofactor.

Its subcellular location is the mitochondrion matrix. The enzyme catalyses succinyl-CoA + glycine + H(+) = 5-aminolevulinate + CO2 + CoA. Its pathway is porphyrin-containing compound metabolism; protoporphyrin-IX biosynthesis; 5-aminolevulinate from glycine: step 1/1. Ihnhibited by hemin. Functionally, catalyzes the synthesis of 5-aminolevulinate (ALA) from succinyl-CoA and glycine, the first and rate-limiting step in heme biosynthesis. The chain is 5-aminolevulinate synthase, mitochondrial from Saccharomyces cerevisiae (strain ATCC 204508 / S288c) (Baker's yeast).